Reading from the N-terminus, the 282-residue chain is Bis(5'-nucleosyl)-tetraphosphatase, symmetrical (282 aa).

Belongs to the Ap4A hydrolase family.

The catalysed reaction is P(1),P(4)-bis(5'-adenosyl) tetraphosphate + H2O = 2 ADP + 2 H(+). Hydrolyzes diadenosine 5',5'''-P1,P4-tetraphosphate to yield ADP. The sequence is that of Bis(5'-nucleosyl)-tetraphosphatase, symmetrical from Salmonella agona (strain SL483).